A 470-amino-acid chain; its full sequence is Chromosomal replication initiator protein DnaA (470 aa).

The interval 1–68 (MENFWSLCLG…SALAEEVLST (68 aa)) is domain I, interacts with DnaA modulators. The segment at 68–133 (TPVQIELALY…KKPKTLTETS (66 aa)) is domain II. Positions 134 to 350 (GLNPAFRFDN…GALNRIIAMA (217 aa)) are domain III, AAA+ region. Residues Gly178, Gly180, Lys181, and Thr182 each contribute to the ATP site. A domain IV, binds dsDNA region spans residues 351–470 (NFTGHAIDVS…IAVLIQVIRD (120 aa)).

The protein belongs to the DnaA family. As to quaternary structure, oligomerizes as a right-handed, spiral filament on DNA at oriC.

It is found in the cytoplasm. In terms of biological role, plays an essential role in the initiation and regulation of chromosomal replication. ATP-DnaA binds to the origin of replication (oriC) to initiate formation of the DNA replication initiation complex once per cell cycle. Binds the DnaA box (a 9 base pair repeat at the origin) and separates the double-stranded (ds)DNA. Forms a right-handed helical filament on oriC DNA; dsDNA binds to the exterior of the filament while single-stranded (ss)DNA is stabiized in the filament's interior. The ATP-DnaA-oriC complex binds and stabilizes one strand of the AT-rich DNA unwinding element (DUE), permitting loading of DNA polymerase. After initiation quickly degrades to an ADP-DnaA complex that is not apt for DNA replication. Binds acidic phospholipids. The sequence is that of Chromosomal replication initiator protein DnaA from Methylobacillus flagellatus (strain ATCC 51484 / DSM 6875 / VKM B-1610 / KT).